A 208-amino-acid polypeptide reads, in one-letter code: Urease accessory protein UreE (208 aa).

Residues 145–165 form a disordered region; that stretch reads EGGAYSAGGHGHTHAPAATPV.

Belongs to the UreE family.

It localises to the cytoplasm. In terms of biological role, involved in urease metallocenter assembly. Binds nickel. Probably functions as a nickel donor during metallocenter assembly. The chain is Urease accessory protein UreE from Polaromonas naphthalenivorans (strain CJ2).